We begin with the raw amino-acid sequence, 136 residues long: Large ribosomal subunit protein eL27A (136 aa).

The protein belongs to the eukaryotic ribosomal protein eL27 family. As to quaternary structure, component of the large ribosomal subunit (LSU). Mature yeast ribosomes consist of a small (40S) and a large (60S) subunit. The 40S small subunit contains 1 molecule of ribosomal RNA (18S rRNA) and at least 33 different proteins. The large 60S subunit contains 3 rRNA molecules (25S, 5.8S and 5S rRNA) and at least 46 different proteins.

The protein resides in the cytoplasm. The protein localises to the nucleus. Component of the ribosome, a large ribonucleoprotein complex responsible for the synthesis of proteins in the cell. The small ribosomal subunit (SSU) binds messenger RNAs (mRNAs) and translates the encoded message by selecting cognate aminoacyl-transfer RNA (tRNA) molecules. The large subunit (LSU) contains the ribosomal catalytic site termed the peptidyl transferase center (PTC), which catalyzes the formation of peptide bonds, thereby polymerizing the amino acids delivered by tRNAs into a polypeptide chain. The nascent polypeptides leave the ribosome through a tunnel in the LSU and interact with protein factors that function in enzymatic processing, targeting, and the membrane insertion of nascent chains at the exit of the ribosomal tunnel. The sequence is that of Large ribosomal subunit protein eL27A (rpl2701) from Schizosaccharomyces pombe (strain 972 / ATCC 24843) (Fission yeast).